The chain runs to 418 residues: Nisin biosynthesis protein NisC (418 aa).

To B.subtilis SpaC and S.epidermidis EpiC.

In terms of biological role, could be implicated in the processing or the export process of the nisin lantibiotic. The sequence is that of Nisin biosynthesis protein NisC (nisC) from Lactococcus lactis subsp. lactis (Streptococcus lactis).